The chain runs to 345 residues: Beta-2-glycoprotein 1 (345 aa).

The signal sequence occupies residues 1 to 19 (MPPPALVLLLGFLCHVAIA). Sushi domains are found at residues 21–81 (RTCP…KCMP), 82–139 (RVCP…VCAP), 140–202 (ITCP…ECRE), and 203–262 (VRCP…SCKA). 11 disulfides stabilise this stretch: Cys-23–Cys-66, Cys-51–Cys-79, Cys-84–Cys-124, Cys-110–Cys-137, Cys-142–Cys-188, Cys-174–Cys-200, Cys-205–Cys-248, Cys-234–Cys-260, Cys-264–Cys-315, Cys-300–Cys-325, and Cys-307–Cys-345. O-linked (GalNAc...) threonine glycosylation occurs at Thr-33. The N-linked (GlcNAc...) asparagine glycan is linked to Asn-92. Asn-162, Asn-183, and Asn-193 each carry an N-linked (GlcNAc...) asparagine glycan. Asn-253 is a glycosylation site (N-linked (GlcNAc...) asparagine). Residues 263–345 (SCKLSIKRAT…KTDASDVKPC (83 aa)) form a sushi-like region.

In terms of tissue distribution, expressed by the liver and secreted in plasma.

It is found in the secreted. Binds to various kinds of negatively charged substances such as heparin, phospholipids, and dextran sulfate. May prevent activation of the intrinsic blood coagulation cascade by binding to phospholipids on the surface of damaged cells. The polypeptide is Beta-2-glycoprotein 1 (APOH) (Bos taurus (Bovine)).